The sequence spans 190 residues: Superoxide dismutase [Cu-Zn] (190 aa).

Residues 1-23 (MKLTNLALAFTLFGASAVAFAHA) form the signal peptide. Cu cation-binding residues include histidine 83, histidine 85, and histidine 108. Cysteines 90 and 186 form a disulfide. Zn(2+) is bound by residues histidine 108, histidine 117, histidine 126, and aspartate 129. A disordered region spans residues 162–181 (MIHEGGDNHSDHPAPLGGGG). Histidine 164 is a Cu cation binding site.

This sequence belongs to the Cu-Zn superoxide dismutase family. As to quaternary structure, homodimer. Cu cation is required as a cofactor. It depends on Zn(2+) as a cofactor.

The protein localises to the periplasm. The catalysed reaction is 2 superoxide + 2 H(+) = H2O2 + O2. Destroys radicals which are normally produced within the cells and which are toxic to biological systems. This is Superoxide dismutase [Cu-Zn] (sodC) from Actinobacillus pleuropneumoniae (Haemophilus pleuropneumoniae).